We begin with the raw amino-acid sequence, 306 residues long: Non-specific ribonucleoside hydrolase RihC (306 aa).

Residue His235 is part of the active site.

The protein belongs to the IUNH family. RihC subfamily.

In terms of biological role, hydrolyzes both purine and pyrimidine ribonucleosides with a broad-substrate specificity. The polypeptide is Non-specific ribonucleoside hydrolase RihC (Salmonella enteritidis PT4 (strain P125109)).